A 518-amino-acid chain; its full sequence is MNMQWVGASMMLLIPVLFFLGSLTNERRANWNLASAISLLGLFLSMFLGIAVYFEWVNLSISGQWVGVSKMSLVMLGLVCFIAFVNVRYSSAYMAGNVDEEKRYLRWLMVTLGCVVTVIISNHMLVLMVAWIAISLSLHRLLVFFPNRQRAVLAAHKKFIFARVAEACLLGAILILYYEHGTWFISDIYQNVSLSTSLTTLDQFAAMLLALAALVKCAQLPLHGWLIQVVEAPTPVSALLHAGIINLGGYLLIIFAPLIVLSDMAQWILLIVGGITTVLAALVMMTRTSVKVRLAWSTMSQMGLMLVECALGLFELALLHLVAHSCYKAYAFLNAGSEVESSMKRRLSRAVAPSVKEWWFAGIMSAAMVVGLIWLADLSGPYSPWLLFAIAVTLLIAERRGRLTSSSVIGMVGLGVVLLVVYTLQKNGASLIVSSMETSVGWKGDLWIGFLLVMFMVGYFLLRYHSEHIWMRKVRRAFYAGFYLDEWVTRLNLRIYPTRLPVRFKPKKLQVPKEELFQ.

13 helical membrane passes run 3–23 (MQWV…LGSL), 37–57 (ISLL…FEWV), 65–85 (WVGV…IAFV), 114–134 (CVVT…WIAI), 165–185 (AEAC…TWFI), 207–227 (MLLA…GWLI), 242–262 (AGII…IVLS), 264–284 (MAQW…ALVM), 302–322 (MGLM…LHLV), 358–378 (WWFA…LADL), 379–399 (SGPY…IAER), 403–423 (LTSS…VVYT), and 442–462 (WKGD…YFLL).

This sequence belongs to the inorganic carbon transporter (TC 9.A.2) DabB family. In terms of assembly, forms a complex with DabA.

The protein localises to the cell inner membrane. Intracellular DIC accumulation is sensitive to CCCP (carbonyl cyanide-m-chlorophenylhydrazone) and DCCD (N,N-dicyclohexylcarbodiimide) and therefore likely driven by either proton gradient, ATP, or both. Its function is as follows. Part of an energy-coupled inorganic carbon pump involved in transport of dissolved inorganic carbon (DIC) with downstream gene dabA (Tcr_0854); has been suggested to be a proton-DIC symporter. The protein is Probable inorganic carbon transporter subunit DabB of Hydrogenovibrio crunogenus (strain DSM 25203 / XCL-2) (Thiomicrospira crunogena).